Consider the following 488-residue polypeptide: GlcNAc-binding protein A (488 aa).

The N-terminal stretch at 1 to 24 (MIMIITKKTLLPVTLALFSSGVMA) is a signal peptide. The region spanning 25-202 (HGYVSSVEGG…SFYNVIDVMF (178 aa)) is the Chitin-binding type-4 domain. Residues 439-480 (AGSKVLATDGRIYECKPFPYSGYCIQWSPSATQFEPGVGSDW) form the Chitin-binding type-3 domain.

It belongs to the GbpA family.

The protein resides in the secreted. Its function is as follows. Probably interacts with GlcNAc residues. May promote attachment to both epithelial cell surfaces and chitin. In Photobacterium profundum (strain SS9), this protein is GlcNAc-binding protein A.